We begin with the raw amino-acid sequence, 625 residues long: Chaperone protein HtpG (625 aa).

The segment at 1 to 341 (MEKKQFQAES…SEDLSLNISR (341 aa)) is a; substrate-binding. The b stretch occupies residues 342–551 (EMLQHDRQLK…DGEITLEMEK (210 aa)). Residues 552 to 625 (VLQAMPDNQN…FSQNMCKVMV (74 aa)) are c.

This sequence belongs to the heat shock protein 90 family. As to quaternary structure, homodimer.

Its subcellular location is the cytoplasm. In terms of biological role, molecular chaperone. Has ATPase activity. The chain is Chaperone protein HtpG from Shouchella clausii (strain KSM-K16) (Alkalihalobacillus clausii).